A 246-amino-acid polypeptide reads, in one-letter code: Protein 3F (246 aa).

The signal sequence occupies residues 1-19 (MKLLSKLILTLALATYASA). An N-linked (GlcNAc...) asparagine glycan is attached at asparagine 52. A compositionally biased stretch (basic and acidic residues) spans 113–124 (EVRPIDRLKDNA). The interval 113–223 (EVRPIDRLKD…EEAEHVEKGA (111 aa)) is disordered. The segment covering 126-145 (AANTENAQKSPNTQSTQKGS) has biased composition (polar residues). 3 repeat units span residues 145–153 (SPKSDAKEA), 154–162 (SPKTDAKEA), and 163–171 (SPKSDAKEA). The 3.5 X 9 AA tandem repeats of S-P-K-[ST]-D-A-K-E-A stretch occupies residues 145-176 (SPKSDAKEASPKTDAKEASPKSDAKEASPKTD). Residues 146–177 (PKSDAKEASPKTDAKEASPKSDAKEASPKTDT) show a composition bias toward basic and acidic residues. Residues 172–176 (SPKTD) form a 4; truncated repeat. Residues 181-213 (SSPKTDTKSSTQKPSSSSDSSKAKAEANTAANN) show a composition bias toward low complexity.

This chain is Protein 3F (pspG), found in Dictyostelium discoideum (Social amoeba).